The chain runs to 98 residues: Small ribosomal subunit protein bS20 (98 aa).

The span at 1-15 shows a compositional bias: basic residues; sequence MAPKKTTKKGGPKKR. Residues 1 to 21 form a disordered region; the sequence is MAPKKTTKKGGPKKRPSAEKR.

It belongs to the bacterial ribosomal protein bS20 family.

Functionally, binds directly to 16S ribosomal RNA. In Chlamydia felis (strain Fe/C-56) (Chlamydophila felis), this protein is Small ribosomal subunit protein bS20.